The following is an 88-amino-acid chain: Small ribosomal subunit protein bS20 (88 aa).

It belongs to the bacterial ribosomal protein bS20 family.

Functionally, binds directly to 16S ribosomal RNA. This Desulforamulus reducens (strain ATCC BAA-1160 / DSM 100696 / MI-1) (Desulfotomaculum reducens) protein is Small ribosomal subunit protein bS20.